Consider the following 70-residue polypeptide: uncharacterized protein (70 aa).

The chain crosses the membrane as a helical span at residues 12-32 (VLFMNFFSVFVCTIGTLFLVF).

The protein resides in the membrane. This is an uncharacterized protein from Saccharomyces cerevisiae (strain ATCC 204508 / S288c) (Baker's yeast).